The chain runs to 446 residues: Exopolygalacturonase (446 aa).

The first 17 residues, 1-17 (MRVTDIISCALLQASIA), serve as a signal peptide directing secretion. N-linked (GlcNAc...) asparagine glycans are attached at residues N53, N118, N134, and N204. A PbH1 1 repeat occupies 236–257 (SDNIIIQNSNINNGDDCVSFKP). The active-site Proton donor is D250. An intrachain disulfide couples C252 to C269. Residues N258 and N270 are each glycosylated (N-linked (GlcNAc...) asparagine). PbH1 repeat units lie at residues 259–279 (STNI…SVGS), 290–311 (VENI…RIKV), and 332–353 (VRNV…EITQ). The active site involves H273. Residues N297, N302, N334, N359, and N369 are each glycosylated (N-linked (GlcNAc...) asparagine). PbH1 repeat units follow at residues 367–398 (PSNL…VVCS) and 403–434 (CSDI…QSQV). 2 disulfide bridges follow: C397-C403 and C424-C436. N-linked (GlcNAc...) asparagine glycosylation occurs at N435.

It belongs to the glycosyl hydrolase 28 family.

The protein resides in the secreted. The catalysed reaction is [(1-&gt;4)-alpha-D-galacturonosyl](n) + H2O = alpha-D-galacturonate + [(1-&gt;4)-alpha-D-galacturonosyl](n-1). Hydrolysis of 1,4-alpha-D-galactosiduronic linkages in pectate and other galacturonans. The polypeptide is Exopolygalacturonase (PGX1) (Cochliobolus carbonum (Maize leaf spot fungus)).